The primary structure comprises 498 residues: Bifunctional protein GlmU (498 aa).

Positions 1–238 (MSDAAVVILA…PALVAGVNDR (238 aa)) are pyrophosphorylase. UDP-N-acetyl-alpha-D-glucosamine-binding positions include 9–12 (LAAG), Lys-23, Gln-80, and 85–86 (GT). Position 111 (Asp-111) interacts with Mg(2+). Positions 148, 163, 178, and 236 each coordinate UDP-N-acetyl-alpha-D-glucosamine. Residue Asn-236 coordinates Mg(2+). The linker stretch occupies residues 239-259 (VQLADLGAELNRRVVAAHQRA). The interval 260–498 (GVTIVDPATT…TAKPAPATGE (239 aa)) is N-acetyltransferase. UDP-N-acetyl-alpha-D-glucosamine contacts are provided by Arg-341 and Lys-359. His-371 acts as the Proton acceptor in catalysis. UDP-N-acetyl-alpha-D-glucosamine-binding residues include Tyr-374 and Asn-385. Acetyl-CoA contacts are provided by residues Ala-388, 394 to 395 (NY), Ser-413, and Ala-431. Residues 470–498 (AAEAAAADGDTAAADRAAATAKPAPATGE) form a disordered region.

It in the N-terminal section; belongs to the N-acetylglucosamine-1-phosphate uridyltransferase family. The protein in the C-terminal section; belongs to the transferase hexapeptide repeat family. In terms of assembly, homotrimer. The cofactor is Mg(2+).

The protein resides in the cytoplasm. The catalysed reaction is alpha-D-glucosamine 1-phosphate + acetyl-CoA = N-acetyl-alpha-D-glucosamine 1-phosphate + CoA + H(+). It catalyses the reaction N-acetyl-alpha-D-glucosamine 1-phosphate + UTP + H(+) = UDP-N-acetyl-alpha-D-glucosamine + diphosphate. It participates in nucleotide-sugar biosynthesis; UDP-N-acetyl-alpha-D-glucosamine biosynthesis; N-acetyl-alpha-D-glucosamine 1-phosphate from alpha-D-glucosamine 6-phosphate (route II): step 2/2. It functions in the pathway nucleotide-sugar biosynthesis; UDP-N-acetyl-alpha-D-glucosamine biosynthesis; UDP-N-acetyl-alpha-D-glucosamine from N-acetyl-alpha-D-glucosamine 1-phosphate: step 1/1. Its pathway is bacterial outer membrane biogenesis; LPS lipid A biosynthesis. Catalyzes the last two sequential reactions in the de novo biosynthetic pathway for UDP-N-acetylglucosamine (UDP-GlcNAc). The C-terminal domain catalyzes the transfer of acetyl group from acetyl coenzyme A to glucosamine-1-phosphate (GlcN-1-P) to produce N-acetylglucosamine-1-phosphate (GlcNAc-1-P), which is converted into UDP-GlcNAc by the transfer of uridine 5-monophosphate (from uridine 5-triphosphate), a reaction catalyzed by the N-terminal domain. This Mycolicibacterium gilvum (strain PYR-GCK) (Mycobacterium gilvum (strain PYR-GCK)) protein is Bifunctional protein GlmU.